We begin with the raw amino-acid sequence, 168 residues long: Phosphopantetheine adenylyltransferase (168 aa).

Thr14 lines the substrate pocket. Residues 14–15 (TF) and His22 contribute to the ATP site. Substrate is bound by residues Lys46, Leu78, and Arg92. ATP-binding positions include 93 to 95 (GLR), Glu103, and 128 to 134 (YSFISSS).

It belongs to the bacterial CoaD family. As to quaternary structure, homohexamer. Requires Mg(2+) as cofactor.

It localises to the cytoplasm. The catalysed reaction is (R)-4'-phosphopantetheine + ATP + H(+) = 3'-dephospho-CoA + diphosphate. It functions in the pathway cofactor biosynthesis; coenzyme A biosynthesis; CoA from (R)-pantothenate: step 4/5. Functionally, reversibly transfers an adenylyl group from ATP to 4'-phosphopantetheine, yielding dephospho-CoA (dPCoA) and pyrophosphate. The chain is Phosphopantetheine adenylyltransferase from Xanthomonas euvesicatoria pv. vesicatoria (strain 85-10) (Xanthomonas campestris pv. vesicatoria).